Consider the following 309-residue polypeptide: D-alanine--D-alanine ligase (309 aa).

The ATP-grasp domain occupies 104 to 306 (KLLWQSFNLP…YQILVQKILE (203 aa)). ATP is bound at residue 137 to 192 (ISLLGLPIIVKPNQEGSSIGITIVYSYETLYKACKTAFIFDNSILIEKFIYGEEYT). Mg(2+)-binding residues include aspartate 260, glutamate 273, and asparagine 275.

It belongs to the D-alanine--D-alanine ligase family. Mg(2+) is required as a cofactor. Mn(2+) serves as cofactor.

It is found in the cytoplasm. It carries out the reaction 2 D-alanine + ATP = D-alanyl-D-alanine + ADP + phosphate + H(+). Its pathway is cell wall biogenesis; peptidoglycan biosynthesis. Its function is as follows. Cell wall formation. This Buchnera aphidicola subsp. Baizongia pistaciae (strain Bp) protein is D-alanine--D-alanine ligase.